Reading from the N-terminus, the 402-residue chain is Pentalenic acid synthase (402 aa).

A disordered region spans residues Met1–Tyr28. Residue Cys351 coordinates heme.

This sequence belongs to the cytochrome P450 family. It depends on heme as a cofactor.

The catalysed reaction is 1-deoxypentalenate + reduced 2[4Fe-4S]-[ferredoxin] + O2 + 2 H(+) = pentalenate + oxidized 2[4Fe-4S]-[ferredoxin] + H2O. It participates in antibiotic biosynthesis; neopentalenolactone biosynthesis. Functionally, catalyzes the conversion of 1-deoxypentalenic acid to pentalenic acid in the biosynthesis of neopentalenolactone antibiotic. This is Pentalenic acid synthase (cyp28) from Streptomyces avermitilis (strain ATCC 31267 / DSM 46492 / JCM 5070 / NBRC 14893 / NCIMB 12804 / NRRL 8165 / MA-4680).